The chain runs to 699 residues: DNA ligase (699 aa).

NAD(+) is bound by residues 47-51 (DAQYD), 96-97 (SL), and Glu128. The active-site N6-AMP-lysine intermediate is Lys130. NAD(+)-binding residues include Arg151, Glu186, Lys303, and Lys327. The Zn(2+) site is built by Cys422, Cys425, Cys440, and Cys446. The BRCT domain occupies 620-699 (GDNLLLSNQT…EEWIKMVNEL (80 aa)).

It belongs to the NAD-dependent DNA ligase family. LigA subfamily. The cofactor is Mg(2+). Mn(2+) is required as a cofactor.

It catalyses the reaction NAD(+) + (deoxyribonucleotide)n-3'-hydroxyl + 5'-phospho-(deoxyribonucleotide)m = (deoxyribonucleotide)n+m + AMP + beta-nicotinamide D-nucleotide.. Its function is as follows. DNA ligase that catalyzes the formation of phosphodiester linkages between 5'-phosphoryl and 3'-hydroxyl groups in double-stranded DNA using NAD as a coenzyme and as the energy source for the reaction. It is essential for DNA replication and repair of damaged DNA. This chain is DNA ligase, found in Orientia tsutsugamushi (strain Ikeda) (Rickettsia tsutsugamushi).